The sequence spans 377 residues: Nitric oxide reductase FlRd-NAD(+) reductase (377 aa).

It belongs to the FAD-dependent oxidoreductase family. It depends on FAD as a cofactor.

It localises to the cytoplasm. It catalyses the reaction 2 reduced [nitric oxide reductase rubredoxin domain] + NAD(+) + H(+) = 2 oxidized [nitric oxide reductase rubredoxin domain] + NADH. It participates in nitrogen metabolism; nitric oxide reduction. One of at least two accessory proteins for anaerobic nitric oxide (NO) reductase. Reduces the rubredoxin moiety of NO reductase. This chain is Nitric oxide reductase FlRd-NAD(+) reductase, found in Escherichia coli O127:H6 (strain E2348/69 / EPEC).